Reading from the N-terminus, the 131-residue chain is Profilin-6 (131 aa).

Cys13 and Cys115 are joined by a disulfide. An Involved in PIP2 interaction motif is present at residues 81–97 (AVIRGKKGSGGITVKKT). Position 111 is a phosphothreonine (Thr111).

Belongs to the profilin family. As to quaternary structure, occurs in many kinds of cells as a complex with monomeric actin in a 1:1 ratio. Post-translationally, phosphorylated by MAP kinases.

It localises to the cytoplasm. The protein resides in the cytoskeleton. Binds to actin and affects the structure of the cytoskeleton. At high concentrations, profilin prevents the polymerization of actin, whereas it enhances it at low concentrations. In Zea mays (Maize), this protein is Profilin-6.